Reading from the N-terminus, the 218-residue chain is Protein-methionine-sulfoxide reductase heme-binding subunit MsrQ (218 aa).

5 helical membrane passes run 12–32, 82–102, 118–138, 150–170, and 180–200; these read TLIK…LALF, MLGL…LWFD, PFIT…ITST, WQWL…HYWW, and QPII…FWAW.

The protein belongs to the MsrQ family. As to quaternary structure, heterodimer of a catalytic subunit (MsrP) and a heme-binding subunit (MsrQ). FMN serves as cofactor. Requires heme b as cofactor.

The protein localises to the cell inner membrane. Functionally, part of the MsrPQ system that repairs oxidized periplasmic proteins containing methionine sulfoxide residues (Met-O), using respiratory chain electrons. Thus protects these proteins from oxidative-stress damage caused by reactive species of oxygen and chlorine generated by the host defense mechanisms. MsrPQ is essential for the maintenance of envelope integrity under bleach stress, rescuing a wide series of structurally unrelated periplasmic proteins from methionine oxidation. MsrQ provides electrons for reduction to the reductase catalytic subunit MsrP, using the quinone pool of the respiratory chain. The sequence is that of Protein-methionine-sulfoxide reductase heme-binding subunit MsrQ from Herminiimonas arsenicoxydans.